A 103-amino-acid polypeptide reads, in one-letter code: MQNQRIRIRLKGFDHRLIDQSTAEIVETAKRTGAQVRGPIPLPTRKERYTILTSPHVNKDARDQYELRTHKRLVDIVEPTEKTVDALMRLDLAAGVDVQISLG.

This sequence belongs to the universal ribosomal protein uS10 family. As to quaternary structure, part of the 30S ribosomal subunit.

Functionally, involved in the binding of tRNA to the ribosomes. The chain is Small ribosomal subunit protein uS10 from Shewanella pealeana (strain ATCC 700345 / ANG-SQ1).